A 500-amino-acid chain; its full sequence is L-arabinose isomerase (500 aa).

4 residues coordinate Mn(2+): E306, E333, H350, and H450.

Belongs to the arabinose isomerase family. Homohexamer. Mn(2+) is required as a cofactor.

The catalysed reaction is beta-L-arabinopyranose = L-ribulose. Its pathway is carbohydrate degradation; L-arabinose degradation via L-ribulose; D-xylulose 5-phosphate from L-arabinose (bacterial route): step 1/3. Functionally, catalyzes the conversion of L-arabinose to L-ribulose. This Escherichia fergusonii (strain ATCC 35469 / DSM 13698 / CCUG 18766 / IAM 14443 / JCM 21226 / LMG 7866 / NBRC 102419 / NCTC 12128 / CDC 0568-73) protein is L-arabinose isomerase.